Consider the following 148-residue polypeptide: UPF0260 protein mll2411 (148 aa).

It belongs to the UPF0260 family.

The protein is UPF0260 protein mll2411 of Mesorhizobium japonicum (strain LMG 29417 / CECT 9101 / MAFF 303099) (Mesorhizobium loti (strain MAFF 303099)).